We begin with the raw amino-acid sequence, 391 residues long: Alkanesulfonate monooxygenase (391 aa).

This sequence belongs to the SsuD family.

It catalyses the reaction an alkanesulfonate + FMNH2 + O2 = an aldehyde + FMN + sulfite + H2O + 2 H(+). In terms of biological role, catalyzes the desulfonation of aliphatic sulfonates. This chain is Alkanesulfonate monooxygenase, found in Methylorubrum extorquens (strain CM4 / NCIMB 13688) (Methylobacterium extorquens).